A 341-amino-acid polypeptide reads, in one-letter code: DnaJ homolog subfamily C member 22 (341 aa).

In terms of domain architecture, TM2 spans 3 to 50 (KGLLVTYALWAVGGPAGLHHLYLGRDSHALLWMLTLGGGGLGWLWEFW). Transmembrane regions (helical) follow at residues 5–25 (LLVTYALWAVGGPAGLHHLYL), 30–50 (HALLWMLTLGGGGLGWLWEFW), 81–101 (FAAQVIVGIYFGLVALISLSS), 105–125 (FYIVALPLAVGLGVLLVAAVG), 135–155 (LGAAFLTSPIFYGRPIAILPI), 185–205 (LGLAYLAFTGPLAYSALCNTA), and 218–238 (FLNWFSFFPLLGRLMEFVLLL). The region spanning 277–341 (LAYQVLGLSE…QPRKPRGSRR (65 aa)) is the J domain.

It is found in the membrane. In terms of biological role, may function as a co-chaperone. The chain is DnaJ homolog subfamily C member 22 (DNAJC22) from Pongo abelii (Sumatran orangutan).